The primary structure comprises 163 residues: Ureidoglycolate lyase 2 (163 aa).

The protein belongs to the ureidoglycolate lyase family. As to quaternary structure, homodimer. Ni(2+) is required as a cofactor.

The enzyme catalyses (S)-ureidoglycolate = urea + glyoxylate. The protein operates within nitrogen metabolism; (S)-allantoin degradation. Its function is as follows. Catalyzes the catabolism of the allantoin degradation intermediate (S)-ureidoglycolate, generating urea and glyoxylate. Involved in the utilization of allantoin as nitrogen source. In Rhizobium meliloti (strain 1021) (Ensifer meliloti), this protein is Ureidoglycolate lyase 2.